The chain runs to 441 residues: Proline--tRNA ligase (441 aa).

Belongs to the class-II aminoacyl-tRNA synthetase family. ProS type 2 subfamily. In terms of assembly, homodimer.

It is found in the cytoplasm. It catalyses the reaction tRNA(Pro) + L-proline + ATP = L-prolyl-tRNA(Pro) + AMP + diphosphate. Functionally, catalyzes the attachment of proline to tRNA(Pro) in a two-step reaction: proline is first activated by ATP to form Pro-AMP and then transferred to the acceptor end of tRNA(Pro). This chain is Proline--tRNA ligase, found in Bartonella quintana (strain Toulouse) (Rochalimaea quintana).